The sequence spans 560 residues: Calcium-binding and coiled-coil domain-containing protein 1-A (560 aa).

2 coiled-coil regions span residues 156-192 (KATFLQNQLEMAQKERNDLMRARLALEEEVISKEKRI) and 367-480 (WWQE…DKML). The disordered stretch occupies residues 480-517 (LMEDKTDSSPPTLSVDLSDSDDESPGDEGVSQQLGPCS). Over residues 487 to 496 (SSPPTLSVDL) the composition is skewed to low complexity.

It belongs to the CALCOCO family.

The protein resides in the cytoplasm. It is found in the nucleus. Its function is as follows. May function as a coactivator for aryl hydrocarbon and nuclear receptors. The protein is Calcium-binding and coiled-coil domain-containing protein 1-A (calcoco1-a) of Xenopus laevis (African clawed frog).